A 428-amino-acid chain; its full sequence is 3-phosphoshikimate 1-carboxyvinyltransferase (428 aa).

3-phosphoshikimate-binding residues include lysine 22, serine 23, and arginine 27. Lysine 22 is a binding site for phosphoenolpyruvate. Phosphoenolpyruvate contacts are provided by glycine 94 and arginine 122. 3-phosphoshikimate contacts are provided by serine 168, serine 169, glutamine 170, serine 196, aspartate 315, and lysine 342. Glutamine 170 contacts phosphoenolpyruvate. Catalysis depends on aspartate 315, which acts as the Proton acceptor. Phosphoenolpyruvate-binding residues include arginine 346, arginine 389, and lysine 414.

The protein belongs to the EPSP synthase family. Monomer.

It is found in the cytoplasm. The enzyme catalyses 3-phosphoshikimate + phosphoenolpyruvate = 5-O-(1-carboxyvinyl)-3-phosphoshikimate + phosphate. The protein operates within metabolic intermediate biosynthesis; chorismate biosynthesis; chorismate from D-erythrose 4-phosphate and phosphoenolpyruvate: step 6/7. Functionally, catalyzes the transfer of the enolpyruvyl moiety of phosphoenolpyruvate (PEP) to the 5-hydroxyl of shikimate-3-phosphate (S3P) to produce enolpyruvyl shikimate-3-phosphate and inorganic phosphate. The sequence is that of 3-phosphoshikimate 1-carboxyvinyltransferase from Thiobacillus denitrificans (strain ATCC 25259 / T1).